The following is a 279-amino-acid chain: Acetyl-coenzyme A carboxylase carboxyl transferase subunit beta (279 aa).

The CoA carboxyltransferase N-terminal domain occupies 23–279; it reads LWWKCEECGA…LVTLFSMLKV (257 aa). Residues cysteine 27, cysteine 30, cysteine 46, and cysteine 49 each coordinate Zn(2+). The C4-type zinc finger occupies 27–49; it reads CEECGAMLHKKQFEDHFFTCAEC.

Belongs to the AccD/PCCB family. In terms of assembly, acetyl-CoA carboxylase is a heterohexamer composed of biotin carboxyl carrier protein (AccB), biotin carboxylase (AccC) and two subunits each of ACCase subunit alpha (AccA) and ACCase subunit beta (AccD). Zn(2+) is required as a cofactor.

Its subcellular location is the cytoplasm. It carries out the reaction N(6)-carboxybiotinyl-L-lysyl-[protein] + acetyl-CoA = N(6)-biotinyl-L-lysyl-[protein] + malonyl-CoA. Its pathway is lipid metabolism; malonyl-CoA biosynthesis; malonyl-CoA from acetyl-CoA: step 1/1. Component of the acetyl coenzyme A carboxylase (ACC) complex. Biotin carboxylase (BC) catalyzes the carboxylation of biotin on its carrier protein (BCCP) and then the CO(2) group is transferred by the transcarboxylase to acetyl-CoA to form malonyl-CoA. The sequence is that of Acetyl-coenzyme A carboxylase carboxyl transferase subunit beta from Pelodictyon phaeoclathratiforme (strain DSM 5477 / BU-1).